A 106-amino-acid chain; its full sequence is Protein S40-3 (106 aa).

Positions 1–65 (MSEEFQESEV…TEEEGEMTPP (65 aa)) are disordered. Positions 16–41 (SFTRKDNKISHNNENYERKSTEKDKI) are enriched in basic and acidic residues.

This sequence belongs to the senescence regulator S40 family.

It localises to the nucleus. Functionally, regulates senescence either by modulating WRKY53 or by activating SAG12. Affects the natural variation of cyst nematodes sex ratio and susceptibility to parasitic nematodes, depending on single nucleotide polymorphism (SNPs) between cultivars. This Arabidopsis thaliana (Mouse-ear cress) protein is Protein S40-3.